A 266-amino-acid polypeptide reads, in one-letter code: Glutamate racemase (266 aa).

Substrate contacts are provided by residues 9–10 and 41–42; these read DS and YG. The Proton donor/acceptor role is filled by Cys-73. Substrate is bound at residue 74-75; that stretch reads NS. The active-site Proton donor/acceptor is the Cys-183. 184 to 185 serves as a coordination point for substrate; that stretch reads TH.

This sequence belongs to the aspartate/glutamate racemases family.

The enzyme catalyses L-glutamate = D-glutamate. It functions in the pathway cell wall biogenesis; peptidoglycan biosynthesis. In terms of biological role, provides the (R)-glutamate required for cell wall biosynthesis. In Shewanella loihica (strain ATCC BAA-1088 / PV-4), this protein is Glutamate racemase.